The primary structure comprises 560 residues: Membrane protein insertase YidC (560 aa).

The next 6 membrane-spanning stretches (helical) occupy residues 5 to 25, 334 to 354, 357 to 377, 431 to 451, 476 to 496, and 522 to 542; these read IINL…WQYF, AIDF…MNFF, YVGN…LLMF, LPIL…YVTI, LFGL…WPIL, and FMPL…LIYW.

It belongs to the OXA1/ALB3/YidC family. Type 1 subfamily. Interacts with the Sec translocase complex via SecD. Specifically interacts with transmembrane segments of nascent integral membrane proteins during membrane integration.

The protein localises to the cell inner membrane. In terms of biological role, required for the insertion and/or proper folding and/or complex formation of integral membrane proteins into the membrane. Involved in integration of membrane proteins that insert both dependently and independently of the Sec translocase complex, as well as at least some lipoproteins. Aids folding of multispanning membrane proteins. The chain is Membrane protein insertase YidC from Rickettsia africae (strain ESF-5).